The following is a 291-amino-acid chain: N-acetylmannosamine kinase (291 aa).

Residues 5–12 (AIDIGGTK) and 132–139 (GVGGGVVS) each bind ATP. Zn(2+) contacts are provided by H156, C166, C168, and C173.

The protein belongs to the ROK (NagC/XylR) family. NanK subfamily. As to quaternary structure, homodimer.

It carries out the reaction an N-acyl-D-mannosamine + ATP = an N-acyl-D-mannosamine 6-phosphate + ADP + H(+). It participates in amino-sugar metabolism; N-acetylneuraminate degradation; D-fructose 6-phosphate from N-acetylneuraminate: step 2/5. In terms of biological role, catalyzes the phosphorylation of N-acetylmannosamine (ManNAc) to ManNAc-6-P. This chain is N-acetylmannosamine kinase, found in Escherichia coli (strain ATCC 8739 / DSM 1576 / NBRC 3972 / NCIMB 8545 / WDCM 00012 / Crooks).